The chain runs to 415 residues: MVDAPHSKCGTFGYVGSSPTAPTLMNTYTRFDISFKKGNGCWLWDEKGKKYLDAVAGIATCSLGHSNRILRKKLSAQLKKVQHISNLYKIEEQEELSKYLTKQSCAESVFFCNSGAEANESAIKLIKKYGNTVHKGKESFILAAESSFHGRTLATLSATGQPKYQKGFEPMVKGFKFFKYNDIASVKKLFEELKANNQKASGILVEPIQGEGGVIPGDKKFFKELREICNKYNSLLILDEVQSGVGRTGKMWGYENLEIEPDGFTLAKGLGGGHAIGALLVQKKANIFTPGDHASTFGGNPFACRAAITVLEEIKRRKILKNVLERGNQLNEGFTKISAKFPKIISGIRGLGLIQGLVINDSYTDAKTITLKAFDKGLLLVPAGGNVVRFVPPLIISRNEINILLKKLDLIFEEM.

Pyridoxal 5'-phosphate-binding positions include 115 to 116 and Phe148; that span reads GA. N(2)-acetyl-L-ornithine is bound at residue Arg151. Residue 239–242 participates in pyridoxal 5'-phosphate binding; it reads DEVQ. N6-(pyridoxal phosphate)lysine is present on Lys268. Residue Ser295 coordinates N(2)-acetyl-L-ornithine. Thr296 is a binding site for pyridoxal 5'-phosphate.

It belongs to the class-III pyridoxal-phosphate-dependent aminotransferase family. ArgD subfamily. As to quaternary structure, homodimer. Pyridoxal 5'-phosphate is required as a cofactor.

The protein localises to the cytoplasm. It catalyses the reaction N(2)-acetyl-L-ornithine + 2-oxoglutarate = N-acetyl-L-glutamate 5-semialdehyde + L-glutamate. It participates in amino-acid biosynthesis; L-arginine biosynthesis; N(2)-acetyl-L-ornithine from L-glutamate: step 4/4. In Prochlorococcus marinus subsp. pastoris (strain CCMP1986 / NIES-2087 / MED4), this protein is Acetylornithine aminotransferase.